A 493-amino-acid polypeptide reads, in one-letter code: Aspartate-semialdehyde dehydrogenase (Non-phosphorylating) (493 aa).

NADP(+) is bound by residues 160–161 (WN), 184–187 (KPAH), and 237–238 (GS). The active-site Proton acceptor is the glutamate 259. Leucine 260 serves as a coordination point for NADP(+). Cysteine 293 serves as the catalytic Nucleophile. Residue glutamate 390 participates in NADP(+) binding.

Belongs to the aldehyde dehydrogenase family.

It is found in the cytoplasm. The catalysed reaction is L-aspartate 4-semialdehyde + NAD(+) + H2O = L-aspartate + NADH + 2 H(+). Functionally, involved in the degradation of ectoine, which allows H.elongata to utilize ectoine as both a carbon and a nitrogen source for growth. Probably catalyzes the NAD(+)-dependent oxidation of L-aspartate-semialdehyde to L-aspartate. In Halomonas elongata (strain ATCC 33173 / DSM 2581 / NBRC 15536 / NCIMB 2198 / 1H9), this protein is Aspartate-semialdehyde dehydrogenase (Non-phosphorylating).